The primary structure comprises 192 residues: dTTP/UTP pyrophosphatase (192 aa).

The active-site Proton acceptor is the D71.

This sequence belongs to the Maf family. YhdE subfamily. It depends on a divalent metal cation as a cofactor.

It is found in the cytoplasm. The enzyme catalyses dTTP + H2O = dTMP + diphosphate + H(+). It catalyses the reaction UTP + H2O = UMP + diphosphate + H(+). Nucleoside triphosphate pyrophosphatase that hydrolyzes dTTP and UTP. May have a dual role in cell division arrest and in preventing the incorporation of modified nucleotides into cellular nucleic acids. This is dTTP/UTP pyrophosphatase from Pseudoalteromonas atlantica (strain T6c / ATCC BAA-1087).